Consider the following 313-residue polypeptide: Putative S-adenosyl-L-methionine-dependent methyltransferase MMAR_0955 (313 aa).

S-adenosyl-L-methionine is bound by residues Asp-132 and 161–162; that span reads DL.

This sequence belongs to the UPF0677 family.

Exhibits S-adenosyl-L-methionine-dependent methyltransferase activity. The sequence is that of Putative S-adenosyl-L-methionine-dependent methyltransferase MMAR_0955 from Mycobacterium marinum (strain ATCC BAA-535 / M).